The following is a 319-amino-acid chain: Ribosomal RNA small subunit methyltransferase H (319 aa).

Residues 34 to 36 (GGH), aspartate 54, phenylalanine 83, aspartate 104, and glutamine 111 contribute to the S-adenosyl-L-methionine site.

It belongs to the methyltransferase superfamily. RsmH family.

Its subcellular location is the cytoplasm. It catalyses the reaction cytidine(1402) in 16S rRNA + S-adenosyl-L-methionine = N(4)-methylcytidine(1402) in 16S rRNA + S-adenosyl-L-homocysteine + H(+). In terms of biological role, specifically methylates the N4 position of cytidine in position 1402 (C1402) of 16S rRNA. The sequence is that of Ribosomal RNA small subunit methyltransferase H from Lactiplantibacillus plantarum (strain ATCC BAA-793 / NCIMB 8826 / WCFS1) (Lactobacillus plantarum).